A 365-amino-acid polypeptide reads, in one-letter code: H-2 class I histocompatibility antigen, D-D alpha chain (365 aa).

Residues 1 to 24 (MGAMAPRTLLLLLAAALGPTQTRA) form the signal peptide. An alpha-1 region spans residues 25–114 (GSHSLRYFVT…ALRYYNQSAG (90 aa)). At 25 to 311 (GSHSLRYFVT…EPPSSTKTNT (287 aa)) the chain is on the extracellular side. Asn-110 carries N-linked (GlcNAc...) asparagine glycosylation. Positions 115 to 206 (GSHTLQWMAG…KNGNATLLRT (92 aa)) are alpha-2. Cys-125 and Cys-188 are oxidised to a cystine. Asn-200 is a glycosylation site (N-linked (GlcNAc...) asparagine). The interval 207–298 (DPPKAHVTHH…GLPEPLTLRW (92 aa)) is alpha-3. The Ig-like C1-type domain occupies 209–297 (PKAHVTHHRR…EGLPEPLTLR (89 aa)). A disulfide bridge links Cys-227 with Cys-283. The interval 299-311 (GKEEPPSSTKTNT) is connecting peptide. A helical transmembrane segment spans residues 312–334 (VIIAVPVVLGAVVILGAVMAFVM). The Cytoplasmic segment spans residues 335–365 (KRRRNTGGKGGDYALAPGSQSSDMSLPDCKV). The disordered stretch occupies residues 343–365 (KGGDYALAPGSQSSDMSLPDCKV). Ser-356 and Ser-359 each carry phosphoserine.

It belongs to the MHC class I family. As to quaternary structure, heterodimer of an alpha chain and a beta chain (beta-2-microglobulin).

It is found in the membrane. Involved in the presentation of foreign antigens to the immune system. In Mus musculus (Mouse), this protein is H-2 class I histocompatibility antigen, D-D alpha chain (H2-D1).